An 873-amino-acid polypeptide reads, in one-letter code: Alanine--tRNA ligase (873 aa).

Zn(2+)-binding residues include His562, His566, Cys664, and His668.

This sequence belongs to the class-II aminoacyl-tRNA synthetase family. Requires Zn(2+) as cofactor.

It is found in the cytoplasm. The catalysed reaction is tRNA(Ala) + L-alanine + ATP = L-alanyl-tRNA(Ala) + AMP + diphosphate. Functionally, catalyzes the attachment of alanine to tRNA(Ala) in a two-step reaction: alanine is first activated by ATP to form Ala-AMP and then transferred to the acceptor end of tRNA(Ala). Also edits incorrectly charged Ser-tRNA(Ala) and Gly-tRNA(Ala) via its editing domain. The polypeptide is Alanine--tRNA ligase (Photobacterium profundum (strain SS9)).